A 1673-amino-acid polypeptide reads, in one-letter code: Protein TIC 214 (1673 aa).

A run of 6 helical transmembrane segments spans residues 32–52 (AGLY…ILLI), 70–90 (LILG…YIAF), 93–113 (PYTL…GNNL), 130–150 (LEIL…TCIF), 170–190 (MVFL…VLMC), and 218–238 (FFLV…IQSL). Composition is skewed to basic and acidic residues over residues 264-276 (LKKS…GKST) and 283-298 (SHEK…SKLE). 4 disordered regions span residues 264-302 (LKKS…NEDE), 547-611 (VVFD…YSIR), 1120-1146 (NKQS…TDNL), and 1370-1433 (QQNQ…SEDD). Residues 562-586 (DNGNIQNNSSDKTINPQNNLTNLKP) are compositionally biased toward polar residues. The segment covering 597–611 (TTEKEPKDDKSYSIR) has biased composition (basic and acidic residues). The span at 1120-1135 (NKQSLQKRNSSGNSNL) shows a compositional bias: polar residues. The segment covering 1370-1379 (QQNQTTTKMN) has biased composition (low complexity). Composition is skewed to basic and acidic residues over residues 1380-1399 (TETK…KKTE) and 1406-1423 (TKNK…KETE).

The protein belongs to the TIC214 family. As to quaternary structure, part of the Tic complex.

The protein resides in the plastid. Its subcellular location is the chloroplast inner membrane. In terms of biological role, involved in protein precursor import into chloroplasts. May be part of an intermediate translocation complex acting as a protein-conducting channel at the inner envelope. The chain is Protein TIC 214 from Cuscuta gronovii (Common dodder).